The following is a 122-amino-acid chain: Large ribosomal subunit protein uL18 (122 aa).

Residues 1 to 24 (MSTLSRKQQTQKRHRRLRRHLSGT) are disordered. Residues 9–21 (QTQKRHRRLRRHL) are compositionally biased toward basic residues.

Belongs to the universal ribosomal protein uL18 family. In terms of assembly, part of the 50S ribosomal subunit; part of the 5S rRNA/L5/L18/L25 subcomplex. Contacts the 5S and 23S rRNAs.

Its function is as follows. This is one of the proteins that bind and probably mediate the attachment of the 5S RNA into the large ribosomal subunit, where it forms part of the central protuberance. The sequence is that of Large ribosomal subunit protein uL18 from Synechococcus sp. (strain WH7803).